The chain runs to 574 residues: Sodium/hydrogen exchanger 8 (574 aa).

A run of 11 helical transmembrane segments spans residues 53 to 73, 77 to 97, 116 to 136, 149 to 169, 184 to 204, 254 to 274, 304 to 324, 347 to 367, 373 to 393, 410 to 430, and 444 to 464; these read MTIF…HLLI, LHFL…GAFI, PNMF…YSLH, LFSV…IYFL, FAFG…IFNA, LGYF…TGLI, GLAE…GIVM, VAFM…FSFP, SFVI…IFPL, MFIM…SLHL, and TTII…MPLI.

It belongs to the monovalent cation:proton antiporter 1 (CPA1) transporter (TC 2.A.36) family.

Its subcellular location is the golgi apparatus membrane. Functionally, involved in pH regulation to eliminate acids generated by active metabolism or to counter adverse environmental conditions. Major proton extruding system driven by the inward sodium ion chemical gradient. Plays an important role in signal transduction. The polypeptide is Sodium/hydrogen exchanger 8 (Gallus gallus (Chicken)).